Reading from the N-terminus, the 163-residue chain is Disulfide bond formation protein B (163 aa).

Over 1–9 (MRLASPRSL) the chain is Cytoplasmic. A helical transmembrane segment spans residues 10–26 (FVIAFLGSALLIAIALY). Residues 27–44 (MEHVMGLAPCPLCIVQRI) are Periplasmic-facing. Cysteine 36 and cysteine 39 are disulfide-bonded. A helical transmembrane segment spans residues 45-61 (CVIGFGLVCLVAAIHGP). Residues 62-67 (AKVGRR) lie on the Cytoplasmic side of the membrane. A helical membrane pass occupies residues 68-85 (VYAAIAALFVAAGAATAI). Residues 86–142 (RQIWLQSVPADQLPSCLPSLEYMMEALPFQEIARLVLHGTAECAEVSWTMLGMSIPE) are Periplasmic-facing. The cysteines at positions 101 and 128 are disulfide-linked. A helical transmembrane segment spans residues 143–161 (WSLLGFIGMAIVCLWQLLR). The Cytoplasmic segment spans residues 162–163 (RD).

The protein belongs to the DsbB family.

The protein localises to the cell inner membrane. Its function is as follows. Required for disulfide bond formation in some periplasmic proteins. Acts by oxidizing the DsbA protein. The chain is Disulfide bond formation protein B from Stutzerimonas stutzeri (strain A1501) (Pseudomonas stutzeri).